A 100-amino-acid chain; its full sequence is Urease subunit gamma (100 aa).

It belongs to the urease gamma subunit family. As to quaternary structure, heterotrimer of UreA (gamma), UreB (beta) and UreC (alpha) subunits. Three heterotrimers associate to form the active enzyme.

It localises to the cytoplasm. It catalyses the reaction urea + 2 H2O + H(+) = hydrogencarbonate + 2 NH4(+). The protein operates within nitrogen metabolism; urea degradation; CO(2) and NH(3) from urea (urease route): step 1/1. Its function is as follows. Expression of the urease operon increases the likelihood of bacterial survival by contributing to acid resistance in vitro and in vivo in BALB/c mice. Y.enterocolitica enters the body via an oral path and must survive the acidic stomach before being able to colonize the intestinal mucosa. In Yersinia enterocolitica, this protein is Urease subunit gamma.